Consider the following 434-residue polypeptide: Adenylosuccinate synthetase (434 aa).

GTP is bound by residues 22-28 (GDEGKGK) and 50-52 (GHT). The active-site Proton acceptor is the Asp-23. Positions 23 and 50 each coordinate Mg(2+). IMP-binding positions include 23 to 26 (DEGK), 48 to 51 (NAGH), Thr-139, Arg-153, Gln-234, Thr-249, and Arg-313. Residue His-51 is the Proton donor of the active site. A substrate-binding site is contributed by 309–315 (ATTGRKR). GTP is bound by residues Arg-315, 341 to 343 (KLD), and 423 to 425 (SVG).

It belongs to the adenylosuccinate synthetase family. Homodimer. Mg(2+) serves as cofactor.

It localises to the cytoplasm. The catalysed reaction is IMP + L-aspartate + GTP = N(6)-(1,2-dicarboxyethyl)-AMP + GDP + phosphate + 2 H(+). It participates in purine metabolism; AMP biosynthesis via de novo pathway; AMP from IMP: step 1/2. Functionally, plays an important role in the de novo pathway of purine nucleotide biosynthesis. Catalyzes the first committed step in the biosynthesis of AMP from IMP. This is Adenylosuccinate synthetase from Chlorobium chlorochromatii (strain CaD3).